The following is a 586-amino-acid chain: MSPSPSSSGKDGGGENAEEAQPQPQPQPQPQPQSQPPSSNKRPSNSTPPPTQLSKIKYSGGPQIVKKERRQSSSRFNLSKNRELQKLPALKDSPTQEREELFIQKLRQCCVLFDFVSDPLSDLKFKEVKRAGLNEMVEYITHSRDVVTEAIYPEAVTMFSVNLFRTLPPSSNPTGAEFDPEEDEPTLEAAWPHLQLVYEFFLRFLESPDFQPNIAKKYIDQKFVLALLDLFDSEDPRERDFLKTILHRIYGKFLGLRAYIRRQINHIFYRFIYETEHHNGIAELLEILGSIINGFALPLKEEHKMFLIRVLLPLHKVKSLSVYHPQLAYCVVQFLEKESSLTEPVIVGLLKFWPKTHSPKEVMFLNELEEILDVIEPSEFSKVMEPLFRQLAKCVSSPHFQVAERALYYWNNEYIMSLISDNAARVLPIMFPALYRNSKSHWNKTIHGLIYNALKLFMEMNQKLFDDCTQQYKAEKQKGRFRMKEREEMWQKIEELARLNPQYPMFRAPPPLPPVYSMETETPTAEDIQLLKRTVETEAVQMLKDIKKEKVLLRRKSELPQDVYTIKALEAHKRAEEFLTASQEAL.

The tract at residues 1–80 (MSPSPSSSGK…QSSSRFNLSK (80 aa)) is disordered. A run of 6 repeats spans residues 21–22 (QP), 23–24 (QP), 25–26 (QP), 27–28 (QP), 29–30 (QP), and 31–32 (QP). Residues 21–36 (QPQPQPQPQPQPQSQP) form an 8 X 2 AA approximate tandem repeats of Q-P region. Positions 23–35 (QPQPQPQPQPQSQ) are enriched in pro residues. The stretch at 33–34 (QS) is one 7; approximate repeat. Repeat 8 spans residues 35–36 (QP). A compositionally biased stretch (low complexity) spans 36–45 (PPSSNKRPSN). Phosphothreonine is present on threonine 47. Serine 72, serine 73, and serine 74 each carry phosphoserine. The SH3-binding; class I motif lies at 507-514 (RAPPPLPP). Residues 532–549 (KRTVETEAVQMLKDIKKE) carry the Nuclear localization signal motif. A phosphoserine mark is found at serine 557 and serine 582.

Belongs to the phosphatase 2A regulatory subunit B56 family. As to quaternary structure, PP2A consists of a common heterodimeric core enzyme, composed of a 36 kDa catalytic subunit (subunit C) and a 65 kDa constant regulatory subunit (PR65 or subunit A), that associates with a variety of regulatory subunits. Proteins that associate with the core dimer include three families of regulatory subunits B (the R2/B/PR55/B55, R3/B''/PR72/PR130/PR59 and R5/B'/B56 families), the 48 kDa variable regulatory subunit, viral proteins, and cell signaling molecules. Interacts with the PP2A A subunit PPP2R1A. Interacts with SGO1. Interacts with ADCY8. In terms of tissue distribution, highly expressed in brain.

Its subcellular location is the nucleus. Its function is as follows. The B regulatory subunit might modulate substrate selectivity and catalytic activity, and might also direct the localization of the catalytic enzyme to a particular subcellular compartment. The protein is Serine/threonine-protein phosphatase 2A 56 kDa regulatory subunit delta isoform (PPP2R5D) of Oryctolagus cuniculus (Rabbit).